Reading from the N-terminus, the 72-residue chain is Large ribosomal subunit protein bL31 (72 aa).

The Zn(2+) site is built by cysteine 16, cysteine 18, cysteine 38, and cysteine 41.

This sequence belongs to the bacterial ribosomal protein bL31 family. Type A subfamily. Part of the 50S ribosomal subunit. Zn(2+) is required as a cofactor.

Its function is as follows. Binds the 23S rRNA. The chain is Large ribosomal subunit protein bL31 from Aliivibrio salmonicida (strain LFI1238) (Vibrio salmonicida (strain LFI1238)).